The following is a 232-amino-acid chain: Small ribosomal subunit protein uS3 (232 aa).

Residues 39–107 (IRKFLKKELF…DVAINIKEEK (69 aa)) form the KH type-2 domain. Residues 213–232 (QPEPAEEKKGGRRPSRKRGE) form a disordered region. The span at 222 to 232 (GGRRPSRKRGE) shows a compositional bias: basic residues.

This sequence belongs to the universal ribosomal protein uS3 family. As to quaternary structure, part of the 30S ribosomal subunit. Forms a tight complex with proteins S10 and S14.

Functionally, binds the lower part of the 30S subunit head. Binds mRNA in the 70S ribosome, positioning it for translation. This chain is Small ribosomal subunit protein uS3, found in Sulfurovum sp. (strain NBC37-1).